Reading from the N-terminus, the 266-residue chain is Hydroxyethylthiazole kinase (266 aa).

Residue Met43 coordinates substrate. ATP-binding residues include Arg119 and Thr166. Position 193 (Gly193) interacts with substrate.

The protein belongs to the Thz kinase family. The cofactor is Mg(2+).

The catalysed reaction is 5-(2-hydroxyethyl)-4-methylthiazole + ATP = 4-methyl-5-(2-phosphooxyethyl)-thiazole + ADP + H(+). Its pathway is cofactor biosynthesis; thiamine diphosphate biosynthesis; 4-methyl-5-(2-phosphoethyl)-thiazole from 5-(2-hydroxyethyl)-4-methylthiazole: step 1/1. Catalyzes the phosphorylation of the hydroxyl group of 4-methyl-5-beta-hydroxyethylthiazole (THZ). The polypeptide is Hydroxyethylthiazole kinase (Methanococcus maripaludis (strain C5 / ATCC BAA-1333)).